The sequence spans 213 residues: 24 kDa ookinete surface protein (213 aa).

The N-terminal stretch at 1–28 is a signal peptide; it reads MNFKYSFIFLFFIQLAIRYNNAKITVDT. Residues 30-59 form the EGF-like 1; truncated domain; the sequence is CKGGKLIQMSNHYECKCPSGYALKTENTCE. 2 EGF-like domains span residues 60–108 and 108–148; these read PIVK…NICK and KPTR…GKCT. 6 disulfides stabilise this stretch: C64–C80, C74–C94, C96–C107, C112–C122, C117–C134, and C136–C147. The 25-residue stretch at 151–175 folds into the EGF-like 4; truncated domain; it reads GETKCLLKCKAAEECKLTGKHYECV. Residue N190 is the site of GPI-anchor amidated asparagine attachment. N190 carries N-linked (GlcNAc...) asparagine glycosylation. Residues 191–213 constitute a propeptide, removed in mature form; that stretch reads SSFMNGMSIISIIALLVIYVIVM.

The protein resides in the cell membrane. The protein is 24 kDa ookinete surface protein of Plasmodium berghei (strain Anka).